The chain runs to 545 residues: CTP synthase (545 aa).

Residues 1 to 266 (MTTNYIFVTG…DDYICKRFSL (266 aa)) are amidoligase domain. Serine 14 provides a ligand contact to CTP. Serine 14 serves as a coordination point for UTP. ATP contacts are provided by residues 15-20 (SLGKGI) and aspartate 72. Positions 72 and 140 each coordinate Mg(2+). CTP is bound by residues 147–149 (DIE), 187–192 (KTKPTQ), and lysine 223. UTP is bound by residues 187 to 192 (KTKPTQ) and lysine 223. ATP is bound at residue 239 to 241 (KDV). The 252-residue stretch at 291–542 (TIGMVGKYIE…VKAASEHQKR (252 aa)) folds into the Glutamine amidotransferase type-1 domain. Glycine 352 lines the L-glutamine pocket. Cysteine 379 serves as the catalytic Nucleophile; for glutamine hydrolysis. L-glutamine-binding positions include 380–383 (LGMQ), glutamate 403, and arginine 470. Residues histidine 515 and glutamate 517 contribute to the active site.

This sequence belongs to the CTP synthase family. Homotetramer.

The enzyme catalyses UTP + L-glutamine + ATP + H2O = CTP + L-glutamate + ADP + phosphate + 2 H(+). It catalyses the reaction L-glutamine + H2O = L-glutamate + NH4(+). The catalysed reaction is UTP + NH4(+) + ATP = CTP + ADP + phosphate + 2 H(+). It participates in pyrimidine metabolism; CTP biosynthesis via de novo pathway; CTP from UDP: step 2/2. Allosterically activated by GTP, when glutamine is the substrate; GTP has no effect on the reaction when ammonia is the substrate. The allosteric effector GTP functions by stabilizing the protein conformation that binds the tetrahedral intermediate(s) formed during glutamine hydrolysis. Inhibited by the product CTP, via allosteric rather than competitive inhibition. In terms of biological role, catalyzes the ATP-dependent amination of UTP to CTP with either L-glutamine or ammonia as the source of nitrogen. Regulates intracellular CTP levels through interactions with the four ribonucleotide triphosphates. This chain is CTP synthase, found in Salmonella arizonae (strain ATCC BAA-731 / CDC346-86 / RSK2980).